The chain runs to 736 residues: MASEGMILTNHDHQIRVGVLTVSDSCFRNLAEDRSGINLKDLVQDPSLLGGTISAYKIVPDEIEEIKETLIDWCDEKELNLILTTGGTGFAPRDVTPEATKEVIEREAPGMALAMLMGSLNVTPLGMLSRPVCGIRGKTLIINLPGSKKGSQECFQFILPALPHAIDLLRDAIVKVKEVHDELEDLPSPPPPLSPPPTTSPHKQTEDKGVQCEEEEEEKKDSGVASTEDSSSSHITAAAIAAKIPDSIISRGVQVLPRDTASLSTTPSESPRAQATSRLSTASCPTPKVQSRCSSKENILRASHSAVDITKVARRHRMSPFPLTSMDKAFITVLEMTPVLGTEIINYRDGMGRVLAQDVYAKDNLPPFPASVKDGYAVRAADGPGDRFIIGESQAGEQPTQTVMPGQVMRVTTGAPIPCGADAVVQVEDTELIRESDDGTEELEVRILVQARPGQDIRPIGHDIKRGECVLAKGTHTGPSEVGLLATVGVTEVEVNKFPVVAVMSTGNELLNPEDDVLPGKIRDSNRSTLLATIQAHGYPTINLGIVGDNPDDLLNALNERISRADVIITSGGVSMGGKYYLKQVLDIDLHAQIHFGRVFMKPGLPTTFATLDIDGVRKIIFALPGQSVSAVVTCNLFVVPALRKMQGILDPRPTIIKARLSCDVKLDPRPEYHRCILTWHHQEPHPWAQSTGNQMSSRLMSMRSANGLLMLPPKTEQYVELHKGEVVDVMVIGRL.

The segment at 14–153 is MPT Mo-transferase; sequence QIRVGVLTVS…LPGSKKGSQE (140 aa). 2 disordered regions span residues 181–232 and 260–290; these read DELE…DSSS and TASL…PKVQ. Residues 187–199 are compositionally biased toward pro residues; that stretch reads PSPPPPLSPPPTT. Positions 261–290 are enriched in polar residues; the sequence is ASLSTTPSESPRAQATSRLSTASCPTPKVQ. Residues 294–736 form an MPT adenylyltransferase region; it reads SSKENILRAS…VVDVMVIGRL (443 aa).

In the N-terminal section; belongs to the MoaB/Mog family. The protein in the C-terminal section; belongs to the MoeA family. As to quaternary structure, homotrimer, homodimer and homooligomer. Interacts with glycine receptors. It depends on Mg(2+) as a cofactor.

The protein localises to the postsynaptic cell membrane. Its subcellular location is the cell membrane. The protein resides in the cytoplasm. It localises to the cytosol. It is found in the cytoskeleton. The protein localises to the cell projection. Its subcellular location is the dendrite. The protein resides in the postsynaptic density. It catalyses the reaction molybdopterin + ATP + H(+) = adenylyl-molybdopterin + diphosphate. The enzyme catalyses adenylyl-molybdopterin + molybdate = Mo-molybdopterin + AMP + H(+). It functions in the pathway cofactor biosynthesis; molybdopterin biosynthesis. Functionally, microtubule-associated protein involved in membrane protein-cytoskeleton interactions. It is thought to anchor the inhibitory glycine receptor (GLYR) to subsynaptic microtubules. Acts as a major instructive molecule at inhibitory synapses, where it also clusters GABA type A receptors. Its function is as follows. Also has a catalytic activity and catalyzes two steps in the biosynthesis of the molybdenum cofactor. In the first step, molybdopterin is adenylated. Subsequently, molybdate is inserted into adenylated molybdopterin and AMP is released. The polypeptide is Gephyrin (GPHN) (Gallus gallus (Chicken)).